A 313-amino-acid polypeptide reads, in one-letter code: Porphobilinogen deaminase (313 aa).

Cys241 bears the S-(dipyrrolylmethanemethyl)cysteine mark.

This sequence belongs to the HMBS family. As to quaternary structure, monomer. It depends on dipyrromethane as a cofactor.

The catalysed reaction is 4 porphobilinogen + H2O = hydroxymethylbilane + 4 NH4(+). It functions in the pathway porphyrin-containing compound metabolism; protoporphyrin-IX biosynthesis; coproporphyrinogen-III from 5-aminolevulinate: step 2/4. Its function is as follows. Tetrapolymerization of the monopyrrole PBG into the hydroxymethylbilane pre-uroporphyrinogen in several discrete steps. This chain is Porphobilinogen deaminase, found in Bacillus velezensis (strain DSM 23117 / BGSC 10A6 / LMG 26770 / FZB42) (Bacillus amyloliquefaciens subsp. plantarum).